The sequence spans 772 residues: Metabotropic glutamate receptor-like protein G (772 aa).

The signal sequence occupies residues 1-23 (MKKIIFLVLFLIFIFKDIKSSYG). Residues 24 to 391 (VDLVNFKMIT…TQVKFSPSIQ (368 aa)) lie on the Extracellular side of the membrane. Residues Asn-73, Asn-126, Asn-262, Asn-313, Asn-343, and Asn-378 are each glycosylated (N-linked (GlcNAc...) asparagine). A helical transmembrane segment spans residues 392 to 412 (IGVSIVSGVLIAIVLLSMVGV). The Cytoplasmic portion of the chain corresponds to 413–426 (YKYRASSSIRSASP). The chain crosses the membrane as a helical span at residues 427–447 (IFLIFILFGALIVFGGIILWV). Over 448–463 (SELNDHVCNGRLWMVT) the chain is Extracellular. Residues 464 to 484 (LGFSTLIGSLVVKNFRIWLIF) traverse the membrane as a helical segment. Residues 485–500 (DNPELKTVKITNYQLY) lie on the Cytoplasmic side of the membrane. The chain crosses the membrane as a helical span at residues 501-521 (PWVACCLVINIILMSILTSLG). The Extracellular segment spans residues 522 to 551 (DLREVDATGIDSLGKYEFLKICKMNNSGAS). Asn-546 is a glycosylation site (N-linked (GlcNAc...) asparagine). A helical membrane pass occupies residues 552–572 (VLYTILAYFGALLLTGVFVSW). The Cytoplasmic segment spans residues 573-586 (KIRIVDIEEFNESR). The chain crosses the membrane as a helical span at residues 587 to 607 (AIAHTLYAISFCLFVIVPLMI). Topologically, residues 608 to 616 (SPLEKQSET) are extracellular. Residues 617–637 (IILSVAGLFITTAAVLIIFLP) traverse the membrane as a helical segment. Residues 638 to 772 (KFYRVYEYGE…QIEPDEKNQD (135 aa)) are Cytoplasmic-facing. The tract at residues 664–772 (TARAESHKSS…QIEPDEKNQD (109 aa)) is disordered. Residues 718–728 (FTEESVSEIDE) are compositionally biased toward acidic residues. Residues 740–753 (PEINQSEQQNSEIE) are compositionally biased toward low complexity. Residues 754–763 (QPPPPPPPQQ) show a composition bias toward pro residues.

This sequence in the N-terminal section; belongs to the BMP lipoprotein family. The protein in the C-terminal section; belongs to the G-protein coupled receptor 3 family. GABA-B receptor subfamily.

It is found in the membrane. This is Metabotropic glutamate receptor-like protein G (grlG) from Dictyostelium discoideum (Social amoeba).